We begin with the raw amino-acid sequence, 965 residues long: Glycine dehydrogenase (decarboxylating) (965 aa).

Lys-711 is modified (N6-(pyridoxal phosphate)lysine).

This sequence belongs to the GcvP family. The glycine cleavage system is composed of four proteins: P, T, L and H. It depends on pyridoxal 5'-phosphate as a cofactor.

The catalysed reaction is N(6)-[(R)-lipoyl]-L-lysyl-[glycine-cleavage complex H protein] + glycine + H(+) = N(6)-[(R)-S(8)-aminomethyldihydrolipoyl]-L-lysyl-[glycine-cleavage complex H protein] + CO2. In terms of biological role, the glycine cleavage system catalyzes the degradation of glycine. The P protein binds the alpha-amino group of glycine through its pyridoxal phosphate cofactor; CO(2) is released and the remaining methylamine moiety is then transferred to the lipoamide cofactor of the H protein. The protein is Glycine dehydrogenase (decarboxylating) of Psychrobacter cryohalolentis (strain ATCC BAA-1226 / DSM 17306 / VKM B-2378 / K5).